The primary structure comprises 234 residues: Gem-associated protein 8 (234 aa).

Residues 60–116 form a disordered region; that stretch reads LAQSPAAKGGTSPKSRSKSPSASGDACRRRSRPGKPGPQRRSTEKPARFAEDNDSES. Residues 67–83 are compositionally biased toward low complexity; the sequence is KGGTSPKSRSKSPSASG. A compositionally biased stretch (basic and acidic residues) spans 100–110; it reads RSTEKPARFAE. The stretch at 130–153 forms a coiled coil; the sequence is ITDELRQYFAETEQHREELRRQHQ.

In terms of assembly, part of the core SMN complex that contains SMN1, GEMIN2/SIP1, DDX20/GEMIN3, GEMIN4, GEMIN5, GEMIN6, GEMIN7, GEMIN8 and STRAP/UNRIP. Part of the SMN-Sm complex that contains SMN1, GEMIN2/SIP1, DDX20/GEMIN3, GEMIN4, GEMIN5, GEMIN6, GEMIN7, GEMIN8, STRAP/UNRIP and the Sm proteins SNRPB, SNRPD1, SNRPD2, SNRPD3, SNRPE, SNRPF and SNRPG. Interacts with GEMIN6; the interaction is direct. Interacts with GEMIN7; the interaction is direct. Interacts with SMN1; the interaction is direct. Interacts with GEMIN4; the interaction is direct.

It is found in the nucleus. Its subcellular location is the gem. It localises to the cytoplasm. Functionally, the SMN complex catalyzes the assembly of small nuclear ribonucleoproteins (snRNPs), the building blocks of the spliceosome, and thereby plays an important role in the splicing of cellular pre-mRNAs. Most spliceosomal snRNPs contain a common set of Sm proteins SNRPB, SNRPD1, SNRPD2, SNRPD3, SNRPE, SNRPF and SNRPG that assemble in a heptameric protein ring on the Sm site of the small nuclear RNA to form the core snRNP (Sm core). In the cytosol, the Sm proteins SNRPD1, SNRPD2, SNRPE, SNRPF and SNRPG are trapped in an inactive 6S pICln-Sm complex by the chaperone CLNS1A that controls the assembly of the core snRNP. To assemble core snRNPs, the SMN complex accepts the trapped 5Sm proteins from CLNS1A forming an intermediate. Binding of snRNA inside 5Sm triggers eviction of the SMN complex, thereby allowing binding of SNRPD3 and SNRPB to complete assembly of the core snRNP. The polypeptide is Gem-associated protein 8 (GEMIN8) (Bos taurus (Bovine)).